Reading from the N-terminus, the 522-residue chain is Zinc finger protein 329 (522 aa).

The residue at position 30 (S30) is a Phosphoserine. 12 C2H2-type zinc fingers span residues 184–206 (YKCA…HRTH), 212–234 (YTCN…RRIH), 240–262 (YKCS…QRIH), 268–290 (YACL…QRTH), 296–318 (YRCN…LRIH), 324–346 (YECS…ERTH), 352–374 (FECV…QKIH), 380–402 (YECK…QRVH), 408–430 (YGCN…QRIH), 436–458 (YECN…QRIH), 464–486 (YQCL…QRLH), and 492–514 (SQCP…QRTH).

Belongs to the krueppel C2H2-type zinc-finger protein family.

Its subcellular location is the nucleus. Functionally, may be involved in transcriptional regulation. This Mus musculus (Mouse) protein is Zinc finger protein 329 (Znf329).